The primary structure comprises 260 residues: Homeobox protein Hox-D11b (260 aa).

Positions 1–14 (MFSSSFSYPSKTSP) are enriched in low complexity. Disordered regions lie at residues 1–21 (MFSS…PFLA) and 151–206 (ITPG…CTRR). The span at 167 to 179 (RSPDGESSEERAG) shows a compositional bias: basic and acidic residues. The homeobox; truncated DNA-binding region spans 205–260 (RRKKRCPYSKQQIIELEREFLFNIYINKDRRMQLSHLLRLTDRCVNNPLNQDSFFT).

The protein belongs to the Abd-B homeobox family.

The protein resides in the nucleus. Its function is as follows. Sequence-specific transcription factor which is part of a developmental regulatory system that provides cells with specific positional identities on the anterior-posterior axis. The chain is Homeobox protein Hox-D11b (hoxd11b) from Takifugu rubripes (Japanese pufferfish).